We begin with the raw amino-acid sequence, 202 residues long: Adenylate kinase (202 aa).

Position 12–20 (12–20 (GVPGVGKTT)) interacts with ATP.

The protein belongs to the archaeal adenylate kinase family.

It localises to the cytoplasm. It carries out the reaction AMP + ATP = 2 ADP. The polypeptide is Adenylate kinase (adkA) (Aeropyrum pernix (strain ATCC 700893 / DSM 11879 / JCM 9820 / NBRC 100138 / K1)).